The following is a 323-amino-acid chain: Beta-ketoacyl-[acyl-carrier-protein] synthase III (323 aa).

Residues Cys114 and His250 contribute to the active site. An ACP-binding region spans residues 251–255 (QANKR). The active site involves Asn280.

Belongs to the thiolase-like superfamily. FabH family. Homodimer.

It localises to the cytoplasm. The enzyme catalyses malonyl-[ACP] + acetyl-CoA + H(+) = 3-oxobutanoyl-[ACP] + CO2 + CoA. It participates in lipid metabolism; fatty acid biosynthesis. Catalyzes the condensation reaction of fatty acid synthesis by the addition to an acyl acceptor of two carbons from malonyl-ACP. Catalyzes the first condensation reaction which initiates fatty acid synthesis and may therefore play a role in governing the total rate of fatty acid production. Possesses both acetoacetyl-ACP synthase and acetyl transacylase activities. Its substrate specificity determines the biosynthesis of branched-chain and/or straight-chain of fatty acids. This chain is Beta-ketoacyl-[acyl-carrier-protein] synthase III, found in Hyphomonas neptunium (strain ATCC 15444).